An 87-amino-acid polypeptide reads, in one-letter code: Cyclin-dependent kinases regulatory subunit 1 (87 aa).

It belongs to the CKS family. As to quaternary structure, interacts with CDKA-1. Interacts with CDKB1-1, CDKB1-2 and CDKB2-1. Interacts with CYCD2-1 and At4g14310.

Functionally, associates with cyclin-dependent kinases (CDKs) and plays an essential role in the regulation of the cell cycle that affects plant growth rate. May inhibit both the G1/S and G2/M phases. The protein is Cyclin-dependent kinases regulatory subunit 1 (CKS1) of Arabidopsis thaliana (Mouse-ear cress).